The sequence spans 262 residues: Acyl-[acyl-carrier-protein]--UDP-N-acetylglucosamine O-acyltransferase (262 aa).

This sequence belongs to the transferase hexapeptide repeat family. LpxA subfamily. Homotrimer.

Its subcellular location is the cytoplasm. The enzyme catalyses a (3R)-hydroxyacyl-[ACP] + UDP-N-acetyl-alpha-D-glucosamine = a UDP-3-O-[(3R)-3-hydroxyacyl]-N-acetyl-alpha-D-glucosamine + holo-[ACP]. It participates in glycolipid biosynthesis; lipid IV(A) biosynthesis; lipid IV(A) from (3R)-3-hydroxytetradecanoyl-[acyl-carrier-protein] and UDP-N-acetyl-alpha-D-glucosamine: step 1/6. Involved in the biosynthesis of lipid A, a phosphorylated glycolipid that anchors the lipopolysaccharide to the outer membrane of the cell. This chain is Acyl-[acyl-carrier-protein]--UDP-N-acetylglucosamine O-acyltransferase, found in Pasteurella multocida (strain Pm70).